The following is a 300-amino-acid chain: Ribosomal protein L11 methyltransferase (300 aa).

S-adenosyl-L-methionine contacts are provided by T152, G173, D195, and N234.

It belongs to the methyltransferase superfamily. PrmA family.

The protein resides in the cytoplasm. The catalysed reaction is L-lysyl-[protein] + 3 S-adenosyl-L-methionine = N(6),N(6),N(6)-trimethyl-L-lysyl-[protein] + 3 S-adenosyl-L-homocysteine + 3 H(+). Methylates ribosomal protein L11. The sequence is that of Ribosomal protein L11 methyltransferase from Burkholderia thailandensis (strain ATCC 700388 / DSM 13276 / CCUG 48851 / CIP 106301 / E264).